The following is a 674-amino-acid chain: Xaa-Pro aminopeptidase 2 (674 aa).

Positions 1 to 21 (MARAHWGCCPWLVLLCACAWG) are cleaved as a signal peptide. N-linked (GlcNAc...) asparagine glycans are attached at residues asparagine 35, asparagine 49, and asparagine 65. Arginine 116 is a binding site for substrate. N-linked (GlcNAc...) asparagine glycosylation is found at asparagine 278 and asparagine 291. Histidine 430 lines the substrate pocket. Positions 450, 461, and 524 each coordinate Zn(2+). Positions 524, 533, and 555 each coordinate substrate. 2 residues coordinate Zn(2+): glutamate 555 and glutamate 569. Alanine 649 carries the GPI-anchor amidated alanine lipid modification. Positions 650-674 (ARAPDTASWASVLVVSTLAILGWSV) are cleaved as a propeptide — removed in mature form.

The protein belongs to the peptidase M24B family. Homotrimer. It depends on Zn(2+) as a cofactor. In terms of processing, N-glycosylated. Expressed in kidney, lung, heart, placenta, liver, small intestine and colon. No expression in brain, skeletal muscle, pancreas, spleen, thymus, prostate, testis and ovary.

It is found in the cell membrane. The catalysed reaction is Release of any N-terminal amino acid, including proline, that is linked to proline, even from a dipeptide or tripeptide.. Its activity is regulated as follows. Inhibited by apstatin and the chelating agent 1,10-phenanthroline. Also inhibited by high concentrations of Zn(2+). Not significantly inhibited by bestatin or phosphoramidon. In terms of biological role, membrane-bound metalloprotease which catalyzes the removal of a penultimate prolyl residue from the N-termini of peptides, such as Arg-Pro-Pro. May play a role in the metabolism of the vasodilator bradykinin. The sequence is that of Xaa-Pro aminopeptidase 2 (XPNPEP2) from Homo sapiens (Human).